We begin with the raw amino-acid sequence, 622 residues long: Chaperone protein HscA homolog (622 aa).

It belongs to the heat shock protein 70 family.

Functionally, chaperone involved in the maturation of iron-sulfur cluster-containing proteins. Has a low intrinsic ATPase activity which is markedly stimulated by HscB. This is Chaperone protein HscA homolog from Burkholderia cenocepacia (strain HI2424).